A 256-amino-acid polypeptide reads, in one-letter code: Imidazole glycerol phosphate synthase subunit HisF (256 aa).

Active-site residues include D11 and D130.

This sequence belongs to the HisA/HisF family. As to quaternary structure, heterodimer of HisH and HisF.

Its subcellular location is the cytoplasm. It carries out the reaction 5-[(5-phospho-1-deoxy-D-ribulos-1-ylimino)methylamino]-1-(5-phospho-beta-D-ribosyl)imidazole-4-carboxamide + L-glutamine = D-erythro-1-(imidazol-4-yl)glycerol 3-phosphate + 5-amino-1-(5-phospho-beta-D-ribosyl)imidazole-4-carboxamide + L-glutamate + H(+). It participates in amino-acid biosynthesis; L-histidine biosynthesis; L-histidine from 5-phospho-alpha-D-ribose 1-diphosphate: step 5/9. IGPS catalyzes the conversion of PRFAR and glutamine to IGP, AICAR and glutamate. The HisF subunit catalyzes the cyclization activity that produces IGP and AICAR from PRFAR using the ammonia provided by the HisH subunit. The chain is Imidazole glycerol phosphate synthase subunit HisF from Cupriavidus metallidurans (strain ATCC 43123 / DSM 2839 / NBRC 102507 / CH34) (Ralstonia metallidurans).